The following is a 165-amino-acid chain: SsrA-binding protein (165 aa).

The tract at residues 141-165 is disordered; the sequence is KLHDKRQDEKRKQADREVKSALARY. Positions 145–159 are enriched in basic and acidic residues; that stretch reads KRQDEKRKQADREVK.

This sequence belongs to the SmpB family.

It is found in the cytoplasm. Its function is as follows. Required for rescue of stalled ribosomes mediated by trans-translation. Binds to transfer-messenger RNA (tmRNA), required for stable association of tmRNA with ribosomes. tmRNA and SmpB together mimic tRNA shape, replacing the anticodon stem-loop with SmpB. tmRNA is encoded by the ssrA gene; the 2 termini fold to resemble tRNA(Ala) and it encodes a 'tag peptide', a short internal open reading frame. During trans-translation Ala-aminoacylated tmRNA acts like a tRNA, entering the A-site of stalled ribosomes, displacing the stalled mRNA. The ribosome then switches to translate the ORF on the tmRNA; the nascent peptide is terminated with the 'tag peptide' encoded by the tmRNA and targeted for degradation. The ribosome is freed to recommence translation, which seems to be the essential function of trans-translation. The chain is SsrA-binding protein from Prochlorococcus marinus (strain MIT 9313).